The sequence spans 513 residues: Histidine--tRNA ligase (513 aa).

The transit peptide at 1 to 24 (MADKAQLQEAIKTQGEVVRKLKSE) directs the protein to the mitochondrion. Positions 3–59 (DKAQLQEAIKTQGEVVRKLKSEKASKEQIDEEVARLLQLKAQLGGDEGKHVFVLKTA) constitute a WHEP-TRS domain. Residues 130–132 (DLT), R157, Q173, D177, R326, and 330–331 (YY) each bind L-histidine.

This sequence belongs to the class-II aminoacyl-tRNA synthetase family.

It localises to the cytoplasm. It is found in the mitochondrion. It catalyses the reaction tRNA(His) + L-histidine + ATP = L-histidyl-tRNA(His) + AMP + diphosphate + H(+). Functionally, catalyzes the aminoacylation of histidyl-tRNA. The sequence is that of Histidine--tRNA ligase from Danio rerio (Zebrafish).